A 367-amino-acid chain; its full sequence is UDP-N-acetylglucosamine--N-acetylmuramyl-(pentapeptide) pyrophosphoryl-undecaprenol N-acetylglucosamine transferase (367 aa).

UDP-N-acetyl-alpha-D-glucosamine is bound by residues 15 to 17 (TGG), asparagine 127, arginine 163, serine 191, isoleucine 249, and glutamine 294.

It belongs to the glycosyltransferase 28 family. MurG subfamily.

It localises to the cell inner membrane. It carries out the reaction di-trans,octa-cis-undecaprenyl diphospho-N-acetyl-alpha-D-muramoyl-L-alanyl-D-glutamyl-meso-2,6-diaminopimeloyl-D-alanyl-D-alanine + UDP-N-acetyl-alpha-D-glucosamine = di-trans,octa-cis-undecaprenyl diphospho-[N-acetyl-alpha-D-glucosaminyl-(1-&gt;4)]-N-acetyl-alpha-D-muramoyl-L-alanyl-D-glutamyl-meso-2,6-diaminopimeloyl-D-alanyl-D-alanine + UDP + H(+). The protein operates within cell wall biogenesis; peptidoglycan biosynthesis. In terms of biological role, cell wall formation. Catalyzes the transfer of a GlcNAc subunit on undecaprenyl-pyrophosphoryl-MurNAc-pentapeptide (lipid intermediate I) to form undecaprenyl-pyrophosphoryl-MurNAc-(pentapeptide)GlcNAc (lipid intermediate II). The polypeptide is UDP-N-acetylglucosamine--N-acetylmuramyl-(pentapeptide) pyrophosphoryl-undecaprenol N-acetylglucosamine transferase (Burkholderia orbicola (strain MC0-3)).